A 108-amino-acid chain; its full sequence is Large ribosomal subunit protein P1 (108 aa).

A disordered region spans residues 67–108 (PAAAPAEAGGEEKKEEEKKEEEEKEEEVSEEEALAGLSALFG). The span at 84–99 (KKEEEEKEEEVSEEEA) shows a compositional bias: acidic residues.

Belongs to the eukaryotic ribosomal protein P1/P2 family. Part of the 50S ribosomal subunit. Homodimer, it forms part of the ribosomal stalk which helps the ribosome interact with GTP-bound translation factors. Forms a heptameric uL10/P0(P1)2(P1)2(P1)2 complex, where uL10/P0 forms an elongated spine to which the P1 dimers bind in a sequential fashion.

Forms part of the ribosomal stalk, playing a central role in the interaction of the ribosome with GTP-bound translation factors. The stalk complex of P.horikoshii binds to E.coli large subunits and confers on them the ability to interact with eukaryotic elongation factors. Each succesive P1 dimer bound along the P0 spine increases the GTPase activity of elongation factors and increases translation by reconsituted ribosomes. This chain is Large ribosomal subunit protein P1, found in Pyrococcus horikoshii (strain ATCC 700860 / DSM 12428 / JCM 9974 / NBRC 100139 / OT-3).